A 483-amino-acid chain; its full sequence is BTB/POZ domain and ankyrin repeat-containing protein NBCL (483 aa).

A BTB domain is found at 25–109; sequence SDVTFSVEGR…LYSGQVSIVP (85 aa). Residues 115–129 form a C2HC NPR-type zinc finger; that stretch reads RPNCGERACWHTHCT. Residues C118, C123, H125, and C128 each contribute to the Zn(2+) site. ANK repeat units follow at residues 254 to 283, 284 to 313, 318 to 347, and 351 to 385; these read QKIR…LNLD, EALA…DVNY, SGKT…DPNV, and DGVT…KLRL. The interval 401–437 is disordered; that stretch reads EGNANANSSNNNNAPCSAATPIYPPMNEDHNSSSSNA. Low complexity predominate over residues 403–419; the sequence is NANANSSNNNNAPCSAA.

Belongs to the plant 'ANKYRIN-BTB/POZ' family. 'NOOT-BOP-COCH-like' (NBCL) subfamily. As to quaternary structure, homodimer. Interacts with APP1 around the plasma membrane and in the nucleus; this interaction disturbs APP1-mediated regulation of the nuclear transcription factor Y subunit (NF-YA1). In terms of tissue distribution, mainly expressed in root nodules, to a lesser extent in shoot apical meristems (SAM) and root meristems (RM), and barely in leaves, non-nodulating roots and root apical meristems (RAM).

It localises to the nucleus. The protein resides in the cytoplasm. Its subcellular location is the cell membrane. It functions in the pathway protein modification; protein ubiquitination. In terms of biological role, may act as a substrate-specific adapter of an E3 ubiquitin-protein ligase complex (CUL3-RBX1-BTB) which mediates the ubiquitination and subsequent proteasomal degradation of target proteins. Transcriptional co-regulator involved in the promotion of leaf and floral meristem fate and determinacy. Required for the abscission of senescent organs, probably by regulating the cell wall disorganization in abscission zones (AZs, e.g. pulvini at the base of leaves). Involved in the coordination of the symbiotic nodule developmental program; promotes the formation of root nodules by interacting directly with APP1 to modulate the expression of the nuclear transcription factor Y subunit (NF-YA1), a key nodulin. Necessary for the robust maintenance of nodule identity throughout the nodule developmental program. The sequence is that of BTB/POZ domain and ankyrin repeat-containing protein NBCL from Lotus japonicus (Lotus corniculatus var. japonicus).